A 181-amino-acid chain; its full sequence is uncharacterized protein (181 aa).

The interval 162 to 181 (QARGPAGTRTPQRRCSSHEA) is disordered.

This is an uncharacterized protein from Homo sapiens (Human).